The primary structure comprises 169 residues: Methanogen homoaconitase small subunit (169 aa).

Positions 27–30 match the YLRT motif; sequence YLRT.

The protein belongs to the LeuD family. LeuD type 2 subfamily. In terms of assembly, heterotetramer of 2 HacA and 2 HacB proteins.

It carries out the reaction (2R)-homocitrate = (2R,3S)-homoisocitrate. The catalysed reaction is (2R)-homocitrate = cis-homoaconitate + H2O. It catalyses the reaction (2R,3S)-homoisocitrate = cis-homoaconitate + H2O. The enzyme catalyses cis-(homo)2aconitate + H2O = (2R,3S)-iso(homo)2citrate. It carries out the reaction cis-(homo)3aconitate + H2O = (2R,3S)-iso(homo)3citrate. It functions in the pathway organic acid metabolism; 2-oxosuberate biosynthesis. Functionally, component of a hydro-lyase with broad substrate specificity for cis-unsaturated tricarboxylic acids. Catalyzes both the reversible dehydration of (R)-homocitrate ((R)-2-hydroxybutane-1,2,4-tricarboxylate) to produce cis-homoaconitate ((Z)-but-1-ene-1,2,4-tricarboxylate), and its hydration to homoisocitrate ((1R,2S)-1-hydroxybutane-1,2,4-tricarboxylate). Is also able to hydrate the analogous longer chain substrates cis-homo(2)-aconitate, cis-homo(3)-aconitate. These reactions are part of the biosynthesis pathway of coenzyme B. This chain is Methanogen homoaconitase small subunit (hacB), found in Methanosarcina mazei (strain ATCC BAA-159 / DSM 3647 / Goe1 / Go1 / JCM 11833 / OCM 88) (Methanosarcina frisia).